A 347-amino-acid chain; its full sequence is Protein-glutamate methylesterase/protein-glutamine glutaminase 4 (347 aa).

The 119-residue stretch at 3–121 (KVLIVDDSAS…HPNHEREARS (119 aa)) folds into the Response regulatory domain. Residue Asp-54 is modified to 4-aspartylphosphate. One can recognise a CheB-type methylesterase domain in the interval 157–342 (PARLKAVAIG…PDRIVTALTS (186 aa)). Catalysis depends on residues Ser-168, His-195, and Asp-289.

Belongs to the CheB family. Phosphorylated by CheA. Phosphorylation of the N-terminal regulatory domain activates the methylesterase activity.

Its subcellular location is the cytoplasm. The enzyme catalyses [protein]-L-glutamate 5-O-methyl ester + H2O = L-glutamyl-[protein] + methanol + H(+). It catalyses the reaction L-glutaminyl-[protein] + H2O = L-glutamyl-[protein] + NH4(+). Involved in chemotaxis. Part of a chemotaxis signal transduction system that modulates chemotaxis in response to various stimuli. Catalyzes the demethylation of specific methylglutamate residues introduced into the chemoreceptors (methyl-accepting chemotaxis proteins or MCP) by CheR. Also mediates the irreversible deamidation of specific glutamine residues to glutamic acid. The sequence is that of Protein-glutamate methylesterase/protein-glutamine glutaminase 4 from Geobacter metallireducens (strain ATCC 53774 / DSM 7210 / GS-15).